We begin with the raw amino-acid sequence, 795 residues long: Volume-regulated anion channel subunit LRRC8E (795 aa).

Topologically, residues 1 to 22 are cytoplasmic; the sequence is MIPVAEFKQFTEQQPAFKVLKP. A helical membrane pass occupies residues 23–43; the sequence is WWDVLAEYLTVAMLMIGVFGC. The Extracellular segment spans residues 44-116; sequence TLQVTQDKII…YETALHWYAK (73 aa). A disulfide bridge connects residues Cys-54 and Cys-300. Residue Asn-63 is glycosylated (N-linked (GlcNAc...) asparagine). A helical membrane pass occupies residues 117–137; it reads YFPYLVVIHTLIFMVCTSFWF. Residues 138–264 are Cytoplasmic-facing; the sequence is KFPGTSSKIE…IRQTVLKVCK (127 aa). The chain crosses the membrane as a helical span at residues 265–285; sequence FFAILVYNLIYVEKISFLVAC. Residues 286-312 are Extracellular-facing; sequence RVETSEITGYASFCCNHTKAHLFSKLA. A glycan (N-linked (GlcNAc...) asparagine) is linked at Asn-301. A helical transmembrane segment spans residues 313–333; it reads FCYISFVCVYGITCLYTLYWL. At 334–795 the chain is on the cytoplasmic side; it reads FHRPLKEYSF…AEVREKMEEE (462 aa). 10 LRR repeats span residues 535 to 556, 558 to 578, 582 to 603, 605 to 626, 630 to 651, 653 to 674, 676 to 697, 699 to 720, 722 to 744, and 745 to 766; these read QLKV…TDVA, HLQR…NSLK, VLRE…IFSL, ALQE…LSFQ, KLVT…VRKL, SLEQ…LGQC, GLRL…LGLL, SLQH…LFFC, KLRT…AALQ, and ALSR…LGDC.

The protein belongs to the LRRC8 family. In terms of assembly, heterohexamer; oligomerizes with other LRRC8 proteins (LRRC8A, LRRC8C, LRRC8D and/or LRRC8B) to form a heterohexamer. In vivo, the subunit composition may depend primarily on expression levels, and heterooligomeric channels containing various proportions of the different LRRC8 proteins may coexist.

It localises to the cell membrane. Its subcellular location is the endoplasmic reticulum membrane. The protein resides in the lysosome membrane. The enzyme catalyses chloride(in) = chloride(out). It catalyses the reaction iodide(out) = iodide(in). It carries out the reaction taurine(out) = taurine(in). The catalysed reaction is 2',3'-cGAMP(out) = 2',3'-cGAMP(in). Non-essential component of the volume-regulated anion channel (VRAC, also named VSOAC channel), an anion channel required to maintain a constant cell volume in response to extracellular or intracellular osmotic changes. The VRAC channel conducts iodide better than chloride and can also conduct organic osmolytes like taurine. Mediates efflux of amino acids, such as aspartate, in response to osmotic stress. The VRAC channel also mediates transport of immunoreactive cyclic dinucleotide GMP-AMP (2'-3'-cGAMP), an immune messenger produced in response to DNA virus in the cytosol. Channel activity requires LRRC8A plus at least one other family member (LRRC8B, LRRC8C, LRRC8D or LRRC8E); channel characteristics depend on the precise subunit composition. Also plays a role in lysosome homeostasis by forming functional lysosomal VRAC channels in response to low cytoplasmic ionic strength condition: lysosomal VRAC channels are necessary for the formation of large lysosome-derived vacuoles, which store and then expel excess water to maintain cytosolic water homeostasis. This Mus musculus (Mouse) protein is Volume-regulated anion channel subunit LRRC8E.